Reading from the N-terminus, the 398-residue chain is Nucleotide-sugar uncharacterized transporter 2 (398 aa).

10 consecutive transmembrane segments (helical) span residues 54–74, 84–104, 119–139, 150–170, 179–199, 201–221, 242–262, 271–291, 299–319, and 322–342; these read FCGP…IILA, FNFP…LLAF, TTPF…SGLA, FYQM…FVLF, VMAL…DLEF, LFGA…KILW, FTVF…VLLF, AILI…LALG, VVLG…IFGS, and GFIS…YTWL.

It belongs to the TPT transporter family. TPT (TC 2.A.7.9) subfamily.

The protein resides in the membrane. This is Nucleotide-sugar uncharacterized transporter 2 from Arabidopsis thaliana (Mouse-ear cress).